The primary structure comprises 416 residues: Exodeoxyribonuclease 7 large subunit (416 aa).

The segment at 1-21 (MTEPDSKPKKGRAGRKKAEPV) is disordered.

The protein belongs to the XseA family. As to quaternary structure, heterooligomer composed of large and small subunits.

It is found in the cytoplasm. It carries out the reaction Exonucleolytic cleavage in either 5'- to 3'- or 3'- to 5'-direction to yield nucleoside 5'-phosphates.. Functionally, bidirectionally degrades single-stranded DNA into large acid-insoluble oligonucleotides, which are then degraded further into small acid-soluble oligonucleotides. This chain is Exodeoxyribonuclease 7 large subunit, found in Deinococcus radiodurans (strain ATCC 13939 / DSM 20539 / JCM 16871 / CCUG 27074 / LMG 4051 / NBRC 15346 / NCIMB 9279 / VKM B-1422 / R1).